A 311-amino-acid polypeptide reads, in one-letter code: NEDD4 family-interacting protein 2 (311 aa).

Residues arginine 1 to alanine 133 form a disordered region. Residues arginine 1–glycine 206 lie on the Cytoplasmic side of the membrane. Residues alanine 7 to alanine 22 are compositionally biased toward low complexity. A compositionally biased stretch (gly residues) spans aspartate 26–glycine 37. Residues serine 38–threonine 47 show a composition bias toward low complexity. Residues arginine 48–glutamine 75 are compositionally biased toward basic and acidic residues. Positions glutamate 92 to threonine 101 are enriched in polar residues. Residues serine 102–proline 120 are compositionally biased toward low complexity. Residues proline 123–tyrosine 126 are interaction with NEDD4. Residues proline 123–tyrosine 126 carry the PPxY motif 1 motif. 4 positions are modified to phosphotyrosine; by SRC: tyrosine 126, tyrosine 142, tyrosine 146, and tyrosine 152. 2 consecutive short sequence motifs (PPxY motif) follow at residues proline 149–tyrosine 152 and proline 159–tyrosine 161. Residues isoleucine 207–phenylalanine 227 traverse the membrane as a helical segment. Residues cysteine 228–threonine 232 lie on the Extracellular side of the membrane. Residues isoleucine 233 to isoleucine 253 form a helical membrane-spanning segment. The Cytoplasmic segment spans residues valine 254–glycine 262. Residues tyrosine 263–phenylalanine 283 form a helical membrane-spanning segment. Residues arginine 284 to leucine 311 lie on the Extracellular side of the membrane.

In terms of assembly, forms heterodimers with NDFIP1. Interacts with HECT domain-containing E3 ubiquitin-protein ligases, including NEDD4. Interacts with NEDD4L. When phosphorylated at Tyr-142, interacts with SRC and LYN SH2 domain. May thus act as a scaffold that recruits SRC to NDFIP1, enhancing NDFIP1 phosphorylation. Interacts with SLC11A2/DMT1. May interact with phosphorylated EGFR. Interacts with KCNH2. Post-translationally, ubiquitinated by NEDD4 and NEDD4L; which does not affect turnover. Also ubiquitinated by ITCH. In terms of processing, undergoes transient tyrosine-phosphorylation following EGF stimulation, most probably catalyzed by SRC. Phosphorylation on Tyr-126, Tyr-146 and Tyr-152 are dependent on the phosphorylation on Tyr-142. Also phosphorylated by LYN and FYN. Ubiquitously expressed, with highest levels in brain, liver, kidney and testis.

The protein resides in the endosome membrane. It is found in the golgi apparatus membrane. It localises to the endosome. The protein localises to the multivesicular body membrane. Its function is as follows. Activates HECT domain-containing E3 ubiquitin-protein ligases, including ITCH, NEDD4, NEDD4L, SMURF2, WWP1 and WWP2, and consequently modulates the stability of their targets. As a result, may control many cellular processes. Recruits ITCH, NEDD4 and SMURF2 to endosomal membranes. Negatively regulates KCNH2 potassium channel activity by decreasing its cell-surface expression and interfering with channel maturation through recruitment of NEDD4L to the Golgi apparatus and multivesicular body where it mediates KCNH2 degradation. May modulate EGFR signaling. Together with NDFIP1, limits the cytokine signaling and expansion of effector Th2 T-cells by promoting degradation of JAK1, probably by ITCH- and NEDD4L-mediated ubiquitination. This is NEDD4 family-interacting protein 2 (Ndfip2) from Mus musculus (Mouse).